Reading from the N-terminus, the 347-residue chain is D-alanine--D-alanine ligase (347 aa).

Residues 131 to 333 (KRVLESAGIA…YPDLIERLVE (203 aa)) form the ATP-grasp domain. An ATP-binding site is contributed by 161 to 216 (EEELTYPVFTKPSNMGSSVGISKSENQEELRQALKLAFQYDSRVLVEQGVNAREIE). Mg(2+)-binding residues include Asp-287, Glu-300, and Asn-302.

Belongs to the D-alanine--D-alanine ligase family. Mg(2+) serves as cofactor. Mn(2+) is required as a cofactor.

It is found in the cytoplasm. The catalysed reaction is 2 D-alanine + ATP = D-alanyl-D-alanine + ADP + phosphate + H(+). Its pathway is cell wall biogenesis; peptidoglycan biosynthesis. Functionally, cell wall formation. The sequence is that of D-alanine--D-alanine ligase from Streptococcus pneumoniae (strain Hungary19A-6).